The following is a 276-amino-acid chain: 3-methyl-2-oxobutanoate hydroxymethyltransferase (276 aa).

Residues aspartate 45 and aspartate 84 each contribute to the Mg(2+) site. 3-methyl-2-oxobutanoate contacts are provided by residues 45–46 (DS), aspartate 84, and lysine 114. Glutamate 116 is a Mg(2+) binding site. Catalysis depends on glutamate 183, which acts as the Proton acceptor.

Belongs to the PanB family. In terms of assembly, homodecamer; pentamer of dimers. The cofactor is Mg(2+).

The protein localises to the cytoplasm. It catalyses the reaction 3-methyl-2-oxobutanoate + (6R)-5,10-methylene-5,6,7,8-tetrahydrofolate + H2O = 2-dehydropantoate + (6S)-5,6,7,8-tetrahydrofolate. The protein operates within cofactor biosynthesis; (R)-pantothenate biosynthesis; (R)-pantoate from 3-methyl-2-oxobutanoate: step 1/2. Its function is as follows. Catalyzes the reversible reaction in which hydroxymethyl group from 5,10-methylenetetrahydrofolate is transferred onto alpha-ketoisovalerate to form ketopantoate. The chain is 3-methyl-2-oxobutanoate hydroxymethyltransferase from Syntrophomonas wolfei subsp. wolfei (strain DSM 2245B / Goettingen).